The following is a 345-amino-acid chain: 2-oxoglutarate and iron-dependent oxygenase domain-containing protein 2 (345 aa).

The region spanning aspartate 207–alanine 301 is the Fe2OG dioxygenase domain. Residues histidine 227, aspartate 229, and histidine 282 each contribute to the Fe cation site. Arginine 292 lines the 2-oxoglutarate pocket.

Belongs to the OGFOD2 family. Requires Fe(2+) as cofactor. It depends on L-ascorbate as a cofactor.

In Danio rerio (Zebrafish), this protein is 2-oxoglutarate and iron-dependent oxygenase domain-containing protein 2 (ogfod2).